Here is a 485-residue protein sequence, read N- to C-terminus: Cobyric acid synthase (485 aa).

The region spanning 250–448 is the GATase cobBQ-type domain; sequence TQTVAVIAYP…LHGMFEDPRV (199 aa). The active-site Nucleophile is the cysteine 334. Histidine 440 is a catalytic residue.

It belongs to the CobB/CobQ family. CobQ subfamily.

It functions in the pathway cofactor biosynthesis; adenosylcobalamin biosynthesis. In terms of biological role, catalyzes amidations at positions B, D, E, and G on adenosylcobyrinic A,C-diamide. NH(2) groups are provided by glutamine, and one molecule of ATP is hydrogenolyzed for each amidation. The protein is Cobyric acid synthase of Polaromonas naphthalenivorans (strain CJ2).